The chain runs to 150 residues: MIVEEIQGNIANLSNSEKQKHVEKVYLENSDLVKRIQRVVTDHGTEIGIRLKQPIDLQYGDILYADDHNMIIVDVNSEDLLVIQPRTLQEMGDIAHQLGNRHLPAQFTETEMLVQYDYLVEDLLKSLGIPYVREDRKVNKAFRHIGHSHD.

This sequence belongs to the UreE family.

The protein localises to the cytoplasm. Its function is as follows. Involved in urease metallocenter assembly. Binds nickel. Probably functions as a nickel donor during metallocenter assembly. The polypeptide is Urease accessory protein UreE (Staphylococcus aureus (strain Mu3 / ATCC 700698)).